The following is a 298-amino-acid chain: MNHIQDAFLNTLKVERNFSEHTLKSYQDDLIQFNQFLEQEHLELNTFEYRDARNYLSYLYSNHLKRTSVSRKISTLRTFYEYWMTLDENIINPFVQLVHPKKEKYLPQFFYEEEMEALFKTVEEDTSKNLRDRVILELLYATGIRVSELVNIKKQDIDFYANGVTVLGKGSKERFVPFGAYCRQSIENYLEHFKPIQSCNHDFLIVNMKGEAITERGVRYVLNDIVKRTAGVSEIHPHKLRHTFATHLLNQGADLRTVQSLLGHVNLSTTGKYTHVSNQQLRKVYLNAHPRAKKENET.

Residues 1–84 (MNHIQDAFLN…TLRTFYEYWM (84 aa)) enclose the Core-binding (CB) domain. One can recognise a Tyr recombinase domain in the interval 105-286 (YLPQFFYEEE…SNQQLRKVYL (182 aa)). Residues arginine 145, lysine 169, histidine 238, arginine 241, and histidine 264 contribute to the active site. Tyrosine 273 functions as the O-(3'-phospho-DNA)-tyrosine intermediate in the catalytic mechanism.

It belongs to the 'phage' integrase family. XerC subfamily. In terms of assembly, forms a cyclic heterotetrameric complex composed of two molecules of XerC and two molecules of XerD.

Its subcellular location is the cytoplasm. In terms of biological role, site-specific tyrosine recombinase, which acts by catalyzing the cutting and rejoining of the recombining DNA molecules. The XerC-XerD complex is essential to convert dimers of the bacterial chromosome into monomers to permit their segregation at cell division. It also contributes to the segregational stability of plasmids. The sequence is that of Tyrosine recombinase XerC from Staphylococcus aureus (strain USA300).